The sequence spans 378 residues: 3-dehydroquinate synthase (378 aa).

NAD(+) contacts are provided by residues 115–119 (GVVGD), 139–140 (TS), Lys152, and Lys161. Zn(2+) contacts are provided by Glu194, His256, and His275.

This sequence belongs to the sugar phosphate cyclases superfamily. Dehydroquinate synthase family. Requires Co(2+) as cofactor. Zn(2+) is required as a cofactor. It depends on NAD(+) as a cofactor.

The protein resides in the cytoplasm. It catalyses the reaction 7-phospho-2-dehydro-3-deoxy-D-arabino-heptonate = 3-dehydroquinate + phosphate. The protein operates within metabolic intermediate biosynthesis; chorismate biosynthesis; chorismate from D-erythrose 4-phosphate and phosphoenolpyruvate: step 2/7. Catalyzes the conversion of 3-deoxy-D-arabino-heptulosonate 7-phosphate (DAHP) to dehydroquinate (DHQ). This chain is 3-dehydroquinate synthase, found in Brucella canis (strain ATCC 23365 / NCTC 10854 / RM-666).